Here is a 455-residue protein sequence, read N- to C-terminus: Secreted triacylglycerol lipase LIP4 (455 aa).

The first 19 residues, 1-19 (MKLNLFILGLLTLAAHAYA), serve as a signal peptide directing secretion. Asparagine 98 is a glycosylation site (N-linked (GlcNAc...) asparagine). Residues cysteine 115 and cysteine 284 are joined by a disulfide bond. Residue serine 197 is the Nucleophile of the active site. A glycan (N-linked (GlcNAc...) asparagine) is linked at asparagine 230. Catalysis depends on residues aspartate 344 and histidine 378. A disulfide bridge links cysteine 360 with cysteine 406.

The protein belongs to the AB hydrolase superfamily. Lipase family. Class Lip subfamily.

The protein localises to the secreted. Its subcellular location is the cell wall. The catalysed reaction is a triacylglycerol + H2O = a diacylglycerol + a fatty acid + H(+). The enzyme catalyses a monoacylglycerol + H2O = glycerol + a fatty acid + H(+). It carries out the reaction a diacylglycerol + H2O = a monoacylglycerol + a fatty acid + H(+). In terms of biological role, secreted lipase involved in Dandruff and seborrheic dermatitis (D/SD) probably via lipase-mediated breakdown of sebaceous lipids and release of irritating free fatty acids. Has triacylglycerol lipase activity and is able to hydrolyze triolein. Mostly converts monoolein to di- and triolein, while free fatty acids are only produced in low amounts. The sequence is that of Secreted triacylglycerol lipase LIP4 from Malassezia globosa (strain ATCC MYA-4612 / CBS 7966) (Dandruff-associated fungus).